The sequence spans 63 residues: Cytochrome c oxidase subunit 7C, mitochondrial (63 aa).

Residues 1 to 16 (MLGQSIRRFTTSVVRR) constitute a mitochondrion transit peptide. Over 17–33 (SHYEEGPGKNLPFSVEN) the chain is Mitochondrial matrix. The residue at position 25 (Lys-25) is an N6-acetyllysine; alternate. N6-succinyllysine; alternate is present on Lys-25. The helical transmembrane segment at 34 to 60 (KWSLLAKMCLYFGSAFATPFLVVRHQL) threads the bilayer. Topologically, residues 61-63 (LKT) are mitochondrial intermembrane.

The protein belongs to the cytochrome c oxidase VIIc family. In terms of assembly, component of the cytochrome c oxidase (complex IV, CIV), a multisubunit enzyme composed of 14 subunits. The complex is composed of a catalytic core of 3 subunits MT-CO1, MT-CO2 and MT-CO3, encoded in the mitochondrial DNA, and 11 supernumerary subunits COX4I1 (or COX4I2), COX5A, COX5B, COX6A1 (or COX6A2), COX6B1 (or COX6B2), COX6C, COX7A2 (or COX7A1), COX7B, COX7C, COX8A and NDUFA4, which are encoded in the nuclear genome. The complex exists as a monomer or a dimer and forms supercomplexes (SCs) in the inner mitochondrial membrane with NADH-ubiquinone oxidoreductase (complex I, CI) and ubiquinol-cytochrome c oxidoreductase (cytochrome b-c1 complex, complex III, CIII), resulting in different assemblies (supercomplex SCI(1)III(2)IV(1) and megacomplex MCI(2)III(2)IV(2)). Interacts with RAB5IF.

It is found in the mitochondrion inner membrane. The protein operates within energy metabolism; oxidative phosphorylation. Functionally, component of the cytochrome c oxidase, the last enzyme in the mitochondrial electron transport chain which drives oxidative phosphorylation. The respiratory chain contains 3 multisubunit complexes succinate dehydrogenase (complex II, CII), ubiquinol-cytochrome c oxidoreductase (cytochrome b-c1 complex, complex III, CIII) and cytochrome c oxidase (complex IV, CIV), that cooperate to transfer electrons derived from NADH and succinate to molecular oxygen, creating an electrochemical gradient over the inner membrane that drives transmembrane transport and the ATP synthase. Cytochrome c oxidase is the component of the respiratory chain that catalyzes the reduction of oxygen to water. Electrons originating from reduced cytochrome c in the intermembrane space (IMS) are transferred via the dinuclear copper A center (CU(A)) of subunit 2 and heme A of subunit 1 to the active site in subunit 1, a binuclear center (BNC) formed by heme A3 and copper B (CU(B)). The BNC reduces molecular oxygen to 2 water molecules using 4 electrons from cytochrome c in the IMS and 4 protons from the mitochondrial matrix. This is Cytochrome c oxidase subunit 7C, mitochondrial (COX7C) from Homo sapiens (Human).